The primary structure comprises 204 residues: N-(5'-phosphoribosyl)anthranilate isomerase (204 aa).

The protein belongs to the TrpF family.

It catalyses the reaction N-(5-phospho-beta-D-ribosyl)anthranilate = 1-(2-carboxyphenylamino)-1-deoxy-D-ribulose 5-phosphate. Its pathway is amino-acid biosynthesis; L-tryptophan biosynthesis; L-tryptophan from chorismate: step 3/5. This Bacillus thuringiensis (strain Al Hakam) protein is N-(5'-phosphoribosyl)anthranilate isomerase.